The primary structure comprises 214 residues: Large ribosomal subunit protein uL1 (214 aa).

It belongs to the universal ribosomal protein uL1 family. In terms of assembly, component of the large ribosomal subunit.

The protein resides in the cytoplasm. Component of the large ribosomal subunit. The ribosome is a large ribonucleoprotein complex responsible for the synthesis of proteins in the cell. The polypeptide is Large ribosomal subunit protein uL1 (RPL10A) (Entamoeba histolytica (strain ATCC 30459 / HM-1:IMSS / ABRM)).